A 1424-amino-acid chain; its full sequence is Putative disease resistance protein At3g14460 (1424 aa).

Residues Trp-152 to Ser-454 form the NB-ARC domain. Gly-200–Thr-207 is a binding site for ATP. LRR repeat units lie at residues Val-498–Phe-523, Pro-552–Ala-571, Leu-572–Leu-595, Leu-597–Leu-618, Asn-620–Glu-641, Leu-642–Leu-665, and Leu-806–Gly-830. Disordered stretches follow at residues Phe-911–Arg-977 and Ile-1050–Asp-1070. 2 stretches are compositionally biased toward polar residues: residues Arg-912–Ser-927 and Ser-934–Ser-972. LRR repeat units lie at residues Pro-1090 to Ser-1114, Leu-1118 to Thr-1139, Thr-1238 to Leu-1262, Ser-1264 to Ser-1286, and Leu-1310 to Lys-1336.

This sequence belongs to the disease resistance NB-LRR family.

Functionally, potential disease resistance protein. In Arabidopsis thaliana (Mouse-ear cress), this protein is Putative disease resistance protein At3g14460.